The following is a 203-amino-acid chain: Outer-membrane lipoprotein LolB (203 aa).

Positions 1–18 (MTLRSFLILLLSSIVLAG) are cleaved as a signal peptide. A lipid anchor (N-palmitoyl cysteine) is attached at cysteine 19. A lipid anchor (S-diacylglycerol cysteine) is attached at cysteine 19.

This sequence belongs to the LolB family. In terms of assembly, monomer.

It localises to the cell outer membrane. In terms of biological role, plays a critical role in the incorporation of lipoproteins in the outer membrane after they are released by the LolA protein. This Vibrio campbellii (strain ATCC BAA-1116) protein is Outer-membrane lipoprotein LolB.